A 499-amino-acid chain; its full sequence is Bifunctional purine biosynthesis protein PurH (499 aa).

The 144-residue stretch at 1–144 folds into the MGS-like domain; it reads MIKRALISVF…KNFKDVVVLT (144 aa).

It belongs to the PurH family.

It carries out the reaction (6R)-10-formyltetrahydrofolate + 5-amino-1-(5-phospho-beta-D-ribosyl)imidazole-4-carboxamide = 5-formamido-1-(5-phospho-D-ribosyl)imidazole-4-carboxamide + (6S)-5,6,7,8-tetrahydrofolate. The enzyme catalyses IMP + H2O = 5-formamido-1-(5-phospho-D-ribosyl)imidazole-4-carboxamide. Its pathway is purine metabolism; IMP biosynthesis via de novo pathway; 5-formamido-1-(5-phospho-D-ribosyl)imidazole-4-carboxamide from 5-amino-1-(5-phospho-D-ribosyl)imidazole-4-carboxamide (10-formyl THF route): step 1/1. It functions in the pathway purine metabolism; IMP biosynthesis via de novo pathway; IMP from 5-formamido-1-(5-phospho-D-ribosyl)imidazole-4-carboxamide: step 1/1. In Clostridium botulinum (strain Langeland / NCTC 10281 / Type F), this protein is Bifunctional purine biosynthesis protein PurH.